A 128-amino-acid polypeptide reads, in one-letter code: Large ribosomal subunit protein bL12 (128 aa).

The segment at 97–128 (GAPSTLKEGVSKEDAEEAKKQLTEAGATVEVK) is disordered. The span at 105 to 118 (GVSKEDAEEAKKQL) shows a compositional bias: basic and acidic residues.

This sequence belongs to the bacterial ribosomal protein bL12 family. In terms of assembly, homodimer. Part of the ribosomal stalk of the 50S ribosomal subunit. Forms a multimeric L10(L12)X complex, where L10 forms an elongated spine to which 2 to 4 L12 dimers bind in a sequential fashion. Binds GTP-bound translation factors.

Functionally, forms part of the ribosomal stalk which helps the ribosome interact with GTP-bound translation factors. Is thus essential for accurate translation. This Lawsonia intracellularis (strain PHE/MN1-00) protein is Large ribosomal subunit protein bL12.